A 338-amino-acid polypeptide reads, in one-letter code: MIKVAINGYGRIGRSILRALYESGKRDQIQIVAINELANPEAMLHLTQYDTTHGRFQSPASLDANVMTIGDDRIQLLHEADAEKLPWRSLDIDIVFEATGALIDRQACEAHIRAGAKQVLISHPSSGDVDATIVYGVNHQDLKAEHKVVSNASCTTNCLVPIIQVLDRAFKVRSGAITTIHSAMNDQQVIDAYHDDLRRTRAAGQSIIPVDTKLARGIERILPEMKDKFEAISVRVPTINVTAIDLSVTLDKRVDIDTVNQVLSQAANGSYQGVVGYTNAPLVSCDFNHDPRSSIVDGTQTRVSDGHLVKLLLWCDNEWGFANRMLDTSLEMIKAVRA.

Residue Arg11 to Ile12 participates in NAD(+) binding. Substrate-binding positions include Ser153 to Thr155, Arg199, Thr212 to Lys213, and Arg235. Cys154 serves as the catalytic Nucleophile. Residue Asn317 coordinates NAD(+).

It belongs to the glyceraldehyde-3-phosphate dehydrogenase family. Epd subfamily. Homotetramer.

It is found in the cytoplasm. It carries out the reaction D-erythrose 4-phosphate + NAD(+) + H2O = 4-phospho-D-erythronate + NADH + 2 H(+). The protein operates within cofactor biosynthesis; pyridoxine 5'-phosphate biosynthesis; pyridoxine 5'-phosphate from D-erythrose 4-phosphate: step 1/5. In terms of biological role, catalyzes the NAD-dependent conversion of D-erythrose 4-phosphate to 4-phosphoerythronate. The polypeptide is D-erythrose-4-phosphate dehydrogenase (Shewanella loihica (strain ATCC BAA-1088 / PV-4)).